A 297-amino-acid polypeptide reads, in one-letter code: Phosphoribosylaminoimidazole-succinocarboxamide synthase (297 aa).

The protein belongs to the SAICAR synthetase family.

It carries out the reaction 5-amino-1-(5-phospho-D-ribosyl)imidazole-4-carboxylate + L-aspartate + ATP = (2S)-2-[5-amino-1-(5-phospho-beta-D-ribosyl)imidazole-4-carboxamido]succinate + ADP + phosphate + 2 H(+). Its pathway is purine metabolism; IMP biosynthesis via de novo pathway; 5-amino-1-(5-phospho-D-ribosyl)imidazole-4-carboxamide from 5-amino-1-(5-phospho-D-ribosyl)imidazole-4-carboxylate: step 1/2. The protein is Phosphoribosylaminoimidazole-succinocarboxamide synthase of Mycobacterium sp. (strain JLS).